The primary structure comprises 285 residues: Golgi phosphoprotein 3-like (285 aa).

Residues 1 to 39 (MTTLTHRARRTEVGKNSEKKVESEENVNQDRNQDNEDIG) form a disordered region. Over residues 10–23 (RTEVGKNSEKKVES) the composition is skewed to basic and acidic residues. 2 residues coordinate a 1,2-diacyl-sn-glycero-3-phospho-(1D-myo-inositol 4-phosphate): W67 and R76. A Phosphoserine modification is found at S112. A 1,2-diacyl-sn-glycero-3-phospho-(1D-myo-inositol 4-phosphate) is bound by residues R157 and R160. The tract at residues 176-187 (EKQNFLLFDMTT) is beta-hairpin required for oligomerization.

It belongs to the GOLPH3/VPS74 family. As to quaternary structure, homooligomer. Does not interact MYO18; differs from GOLPH3 by its inability to interact with MYO18. May interact with ARF1.

The protein localises to the golgi apparatus. The protein resides in the golgi stack membrane. It is found in the trans-Golgi network membrane. Its function is as follows. Phosphatidylinositol-4-phosphate-binding protein that may antagonize the action of GOLPH3 which is required for the process of vesicle budding at the Golgi and anterograde transport to the plasma membrane. The chain is Golgi phosphoprotein 3-like (GOLPH3L) from Bos taurus (Bovine).